The sequence spans 239 residues: Purine nucleoside phosphorylase DeoD-type (239 aa).

An a purine D-ribonucleoside-binding site is contributed by His5. Residues Gly21, Arg25, Arg44, and 88-91 each bind phosphate; that span reads RVGS. A purine D-ribonucleoside contacts are provided by residues 180–182 and 204–205; these read EME and SD. Asp205 acts as the Proton donor in catalysis.

Belongs to the PNP/UDP phosphorylase family. In terms of assembly, homohexamer; trimer of homodimers.

It carries out the reaction a purine D-ribonucleoside + phosphate = a purine nucleobase + alpha-D-ribose 1-phosphate. It catalyses the reaction a purine 2'-deoxy-D-ribonucleoside + phosphate = a purine nucleobase + 2-deoxy-alpha-D-ribose 1-phosphate. Functionally, catalyzes the reversible phosphorolytic breakdown of the N-glycosidic bond in the beta-(deoxy)ribonucleoside molecules, with the formation of the corresponding free purine bases and pentose-1-phosphate. This chain is Purine nucleoside phosphorylase DeoD-type, found in Myxococcus xanthus (strain DK1622).